The chain runs to 108 residues: Con-Ins K1 (108 aa).

Positions 1 to 24 (MTTSSYFLLVALGLLLYVCQSSFG) are cleaved as a signal peptide. Positions 25–28 (SPHT) are excised as a propeptide. 3 disulfide bridges follow: cysteine 41-cysteine 90, cysteine 53-cysteine 103, and cysteine 89-cysteine 94. The residue at position 44 (glutamate 44) is a 4-carboxyglutamate. Positions 57-83 (RKRRGFPSMLKARAKRNEAFLLQRDGR) are cleaved as a propeptide — c peptide. 4-carboxyglutamate is present on glutamate 87. Residue glutamine 107 is modified to Glutamine amide.

Belongs to the insulin family. In terms of assembly, heterodimer of A and B chains; disulfide-linked. In terms of tissue distribution, expressed by the venom gland.

Its subcellular location is the secreted. Functionally, this venom insulin, from a fish-hunting cone snail, facilitates prey capture by rapidly inducing hypoglycemic shock. It is one of the smallest known insulin found in nature and lacks the C-terminal segment of the B chain that, in human insulin, mediates engagement of the insulin receptor (INSR) and assembly of the hormone's hexameric storage form. Despite lacking this segment, it both binds and activates human insulin receptor (long isoform (HIR-B)) with a moderate potency (EC(50)=30.45 nM). In vivo, intraperitoneal injection of this peptide into zebrafish lowers blood glucose with a lower potency than human insulin. In addition, when applied to water, this peptide reduces overall locomotor activity of zebrafish larvae, observed as a significant decrease in the percentage of time spent swimming and movement frequency. When tested on a mouse model of diabetes, this insulin also lowers blood glucose with a 20-fold lower potency than human insulin. This Conus kinoshitai (Kinoshita's cone) protein is Con-Ins K1.